Here is a 393-residue protein sequence, read N- to C-terminus: Flavohemoprotein (393 aa).

The Globin domain maps to 1 to 139 (MLSAEHRAIV…LADLLIGLEE (139 aa)). H85 lines the heme b pocket. Active-site charge relay system residues include Y95 and E138. Residues 150-393 (GGWRGTRAFV…EFFGPASALD (244 aa)) are reductase. In terms of domain architecture, FAD-binding FR-type spans 153–256 (RGTRAFVVAR…LTPSGDFTLE (104 aa)). Residues Y191 and 205–208 (RNYS) contribute to the FAD site. 268–273 (GVGITP) is an NADP(+) binding site. 385–388 (FFGP) provides a ligand contact to FAD.

This sequence belongs to the globin family. Two-domain flavohemoproteins subfamily. It in the C-terminal section; belongs to the flavoprotein pyridine nucleotide cytochrome reductase family. Requires heme b as cofactor. FAD serves as cofactor.

The enzyme catalyses 2 nitric oxide + NADPH + 2 O2 = 2 nitrate + NADP(+) + H(+). The catalysed reaction is 2 nitric oxide + NADH + 2 O2 = 2 nitrate + NAD(+) + H(+). Is involved in NO detoxification in an aerobic process, termed nitric oxide dioxygenase (NOD) reaction that utilizes O(2) and NAD(P)H to convert NO to nitrate, which protects the bacterium from various noxious nitrogen compounds. Therefore, plays a central role in the inducible response to nitrosative stress. The chain is Flavohemoprotein from Burkholderia sp. (strain TH2).